A 1375-amino-acid polypeptide reads, in one-letter code: Patatin-like phospholipase domain-containing protein 6 (1375 aa).

Residues 1–20 (MEAPLQTGMMGTSSHGLATN) are disordered. Topologically, residues 1-59 (MEAPLQTGMMGTSSHGLATNSSGAKVAERDGFQDVLAPGEGSAGRICGAQPVPFVPQVL) are lumenal. A compositionally biased stretch (polar residues) spans 9–20 (MMGTSSHGLATN). Asn20 carries an N-linked (GlcNAc...) asparagine glycan. Residues 60 to 80 (GVMIGAGVAVVVTAVLILLVV) traverse the membrane as a helical segment. Over 81–1375 (RRLRVPKTPA…QEPPGSATDA (1295 aa)) the chain is Cytoplasmic. 195-322 (VLGHFEKPLF…VRVVQIIMVR (128 aa)) is a binding site for a nucleoside 3',5'-cyclic phosphate. Disordered regions lie at residues 352–436 (FPSP…RSDF) and 449–472 (LQEE…PREQ). Residue Ser354 is modified to Phosphoserine. A compositionally biased stretch (polar residues) spans 359–376 (TRTSPVRGSKRMVSTSAT). Thr361 carries the phosphothreonine modification. A phosphoserine mark is found at Ser362 and Ser372. Pro residues predominate over residues 384–398 (GRPPDPTGAPLPGPT). Ser420 carries the post-translational modification Phosphoserine. A Phosphothreonine modification is found at Thr464. A nucleoside 3',5'-cyclic phosphate contacts are provided by residues 511 to 633 (ELAK…VAAR) and 629 to 749 (TVAA…LSQK). The PNPLA domain occupies 981–1147 (LVLGGGGARG…INNLPADIAR (167 aa)). Positions 985-990 (GGGARG) match the GXGXXG motif. The GXSXG signature appears at 1012–1016 (GTSIG). The Nucleophile role is filled by Ser1014. Catalysis depends on Asp1134, which acts as the Proton acceptor. Residues 1134–1136 (DGG) carry the DGA/G motif. Positions 1306–1375 (SYVSDGCADG…QEPPGSATDA (70 aa)) are disordered. The span at 1313-1329 (ADGEESDCLTEYEEDAG) shows a compositional bias: acidic residues.

The protein belongs to the NTE family. Post-translationally, glycosylated. As to expression, expressed in brain, placenta, kidney, neuron and skeletal muscle. Expressed in the developing eye, pituitary and brain.

The protein resides in the endoplasmic reticulum membrane. The catalysed reaction is a 1-acyl-sn-glycero-3-phosphocholine + H2O = sn-glycerol 3-phosphocholine + a fatty acid + H(+). It catalyses the reaction 1-(9Z-octadecenoyl)-sn-glycero-3-phosphocholine + H2O = sn-glycerol 3-phosphocholine + (9Z)-octadecenoate + H(+). It carries out the reaction 1-hexadecanoylglycerol + H2O = glycerol + hexadecanoate + H(+). The enzyme catalyses 2-hexadecanoylglycerol + H2O = glycerol + hexadecanoate + H(+). The catalysed reaction is 1-(9Z-octadecenoyl)-glycerol + H2O = glycerol + (9Z)-octadecenoate + H(+). It catalyses the reaction 2-(9Z-octadecenoyl)-glycerol + H2O = glycerol + (9Z)-octadecenoate + H(+). It carries out the reaction 2-(5Z,8Z,11Z,14Z-eicosatetraenoyl)-glycerol + H2O = glycerol + (5Z,8Z,11Z,14Z)-eicosatetraenoate + H(+). The enzyme catalyses 1-hexadecanoyl-sn-glycero-3-phosphate + H2O = sn-glycerol 3-phosphate + hexadecanoate + H(+). The catalysed reaction is 1-hexadecanoyl-sn-glycero-3-phosphocholine + H2O = sn-glycerol 3-phosphocholine + hexadecanoate + H(+). With respect to regulation, inhibited by a series a OPs such as mipafox (MPX), phenyl saligenin phosphate (PSP), phenyl dipentyl phosphinate (PDPP), diisopropyl fluorophosphate and paraoxon. In terms of biological role, phospholipase B that deacylates intracellular phosphatidylcholine (PtdCho), generating glycerophosphocholine (GroPtdCho). This deacylation occurs at both sn-2 and sn-1 positions of PtdCho. Catalyzes the hydrolysis of several naturally occurring membrane-associated lipids. Hydrolyzes lysophospholipids and monoacylglycerols, preferring the 1-acyl to the 2-acyl isomer. Does not catalyze hydrolysis of di- or triacylglycerols or fatty acid amides. This Homo sapiens (Human) protein is Patatin-like phospholipase domain-containing protein 6.